The primary structure comprises 396 residues: Elongation factor Tu (396 aa).

The tr-type G domain maps to 10 to 205; that stretch reads KPHVNIGTIG…AVDESIPDPV (196 aa). The G1 stretch occupies residues 19-26; sequence GHVDHGKT. Residue 19–26 participates in GTP binding; sequence GHVDHGKT. Thr26 provides a ligand contact to Mg(2+). The interval 62 to 66 is G2; sequence GITIN. The segment at 83–86 is G3; that stretch reads DAPG. GTP-binding positions include 83–87 and 138–141; these read DAPGH and NKAD. Residues 138–141 are G4; that stretch reads NKAD. The G5 stretch occupies residues 175–177; that stretch reads SAL.

It belongs to the TRAFAC class translation factor GTPase superfamily. Classic translation factor GTPase family. EF-Tu/EF-1A subfamily. In terms of assembly, monomer.

It localises to the cytoplasm. It catalyses the reaction GTP + H2O = GDP + phosphate + H(+). In terms of biological role, GTP hydrolase that promotes the GTP-dependent binding of aminoacyl-tRNA to the A-site of ribosomes during protein biosynthesis. The protein is Elongation factor Tu of Mycobacterium sp. (strain JLS).